Reading from the N-terminus, the 120-residue chain is Photosystem II extrinsic protein U (120 aa).

The N-terminal stretch at 1-29 (MKRLLSLLTGVLVMTGLLMALIFPQSAYA) is a signal peptide.

The protein belongs to the PsbU family. As to quaternary structure, PSII is composed of 1 copy each of membrane proteins PsbA, PsbB, PsbC, PsbD, PsbE, PsbF, PsbH, PsbI, PsbJ, PsbK, PsbL, PsbM, PsbT, PsbX, PsbY, Psb30/Ycf12, peripheral proteins PsbO, CyanoQ (PsbQ), PsbU, PsbV and a large number of cofactors. It forms dimeric complexes.

It is found in the cellular thylakoid membrane. Its function is as follows. One of the extrinsic, lumenal subunits of photosystem II (PSII). PSII is a light-driven water plastoquinone oxidoreductase, using light energy to abstract electrons from H(2)O, generating a proton gradient subsequently used for ATP formation. The extrinsic proteins stabilize the structure of photosystem II oxygen-evolving complex (OEC), the ion environment of oxygen evolution and protect the OEC against heat-induced inactivation. The chain is Photosystem II extrinsic protein U from Prochlorococcus marinus (strain MIT 9313).